Consider the following 354-residue polypeptide: Holliday junction branch migration complex subunit RuvB (354 aa).

The segment at 1-183 is large ATPase domain (RuvB-L); the sequence is MTGDNLVSAY…FGFVAHLDFY (183 aa). Residues Arg23, Gly64, Lys67, Thr68, Ser69, 130-132, Arg173, Tyr183, and Arg220 contribute to the ATP site; that span reads EDF. A Mg(2+)-binding site is contributed by Thr68. Residues 184 to 254 form a small ATPAse domain (RuvB-S) region; the sequence is SPADLETLLN…TAQAALTVYD (71 aa). Positions 257-354 are head domain (RuvB-H); that stretch reads ALGLDRLDRA…DLFSVEPDQP (98 aa). DNA-binding residues include Arg312 and Arg317.

Belongs to the RuvB family. As to quaternary structure, homohexamer. Forms an RuvA(8)-RuvB(12)-Holliday junction (HJ) complex. HJ DNA is sandwiched between 2 RuvA tetramers; dsDNA enters through RuvA and exits via RuvB. An RuvB hexamer assembles on each DNA strand where it exits the tetramer. Each RuvB hexamer is contacted by two RuvA subunits (via domain III) on 2 adjacent RuvB subunits; this complex drives branch migration. In the full resolvosome a probable DNA-RuvA(4)-RuvB(12)-RuvC(2) complex forms which resolves the HJ.

It localises to the cytoplasm. The enzyme catalyses ATP + H2O = ADP + phosphate + H(+). In terms of biological role, the RuvA-RuvB-RuvC complex processes Holliday junction (HJ) DNA during genetic recombination and DNA repair, while the RuvA-RuvB complex plays an important role in the rescue of blocked DNA replication forks via replication fork reversal (RFR). RuvA specifically binds to HJ cruciform DNA, conferring on it an open structure. The RuvB hexamer acts as an ATP-dependent pump, pulling dsDNA into and through the RuvAB complex. RuvB forms 2 homohexamers on either side of HJ DNA bound by 1 or 2 RuvA tetramers; 4 subunits per hexamer contact DNA at a time. Coordinated motions by a converter formed by DNA-disengaged RuvB subunits stimulates ATP hydrolysis and nucleotide exchange. Immobilization of the converter enables RuvB to convert the ATP-contained energy into a lever motion, pulling 2 nucleotides of DNA out of the RuvA tetramer per ATP hydrolyzed, thus driving DNA branch migration. The RuvB motors rotate together with the DNA substrate, which together with the progressing nucleotide cycle form the mechanistic basis for DNA recombination by continuous HJ branch migration. Branch migration allows RuvC to scan DNA until it finds its consensus sequence, where it cleaves and resolves cruciform DNA. The sequence is that of Holliday junction branch migration complex subunit RuvB from Salinispora tropica (strain ATCC BAA-916 / DSM 44818 / JCM 13857 / NBRC 105044 / CNB-440).